Consider the following 223-residue polypeptide: Adenylate kinase 4, mitochondrial (223 aa).

An a ribonucleoside 5'-triphosphate-binding site is contributed by Gly15–Thr20. An NMP region spans residues Ser35–Val64. Residues Ser36 and Arg41 each coordinate AMP. N6-succinyllysine is present on Lys60. AMP is bound by residues Leu62 to Val64, Gly89 to Arg92, and Gln96. Residues Arg125–Asp162 are LID. Residues Arg126 and Val135–Tyr136 contribute to the a ribonucleoside 5'-triphosphate site. AMP is bound at residue Arg170. Position 175 is an N6-acetyllysine (Lys175). N6-acetyllysine; alternate occurs at positions 179 and 186. Lys179 and Lys186 each carry N6-succinyllysine; alternate. Position 199 (Thr199) interacts with a ribonucleoside 5'-triphosphate.

This sequence belongs to the adenylate kinase family. AK3 subfamily. As to quaternary structure, monomer. Interacts with SLC25A5/ANT2. As to expression, expressed in kidney, liver, stomach, brain, spinal cord, heart, ovary, oviduct, colon, jejunum, ileum and testis (at protein level). In the brain, expressed in the pyramidal cells of the cerebrum and glial cells in the cerebellum (at protein level). In the heart, expressed by myocytes (at protein level). In the kidney, expressed in the proximal to distal tubule in the cortex and the outer and inner zones of the medulla (at protein level). In the stomach, expressed in stratified squamous epithelia in the forestomach and in the gastric pit and mucus producing cells of the glandular stomach (at protein level). Expressed in epithelial cells of the jejunum, ileum, and colon (at protein level). In the testis, expressed by spermatocytes (at protein level). In the ovaries, expressed by oocytes, follicular epithelial cells, and corpus luteum cells (at protein level). In the oviduct, expressed in the epithelia of the isthmus and the ciliated cells of the ampulla (at protein level). Expressed in the pyramidal cells in the hippocampus.

Its subcellular location is the mitochondrion matrix. It carries out the reaction a ribonucleoside 5'-phosphate + ATP = a ribonucleoside 5'-diphosphate + ADP. The enzyme catalyses AMP + ATP = 2 ADP. The catalysed reaction is GTP + AMP = GDP + ADP. It catalyses the reaction CMP + ATP = CDP + ADP. It carries out the reaction GTP + CMP = CDP + GDP. The enzyme catalyses dAMP + ATP = dADP + ADP. The catalysed reaction is dCMP + ATP = dCDP + ADP. It catalyses the reaction a 2'-deoxyribonucleoside 5'-diphosphate + ATP = a 2'-deoxyribonucleoside 5'-triphosphate + ADP. It carries out the reaction a ribonucleoside 5'-diphosphate + ATP = a ribonucleoside 5'-triphosphate + ADP. The enzyme catalyses GDP + ATP = GTP + ADP. The catalysed reaction is CDP + GTP = CTP + GDP. It catalyses the reaction CDP + ATP = CTP + ADP. It carries out the reaction UDP + ATP = UTP + ADP. The enzyme catalyses GTP + UDP = UTP + GDP. The catalysed reaction is dADP + GTP = dATP + GDP. It catalyses the reaction dCDP + GTP = dCTP + GDP. It carries out the reaction dCDP + ATP = dCTP + ADP. The enzyme catalyses dGDP + ATP = dGTP + ADP. The catalysed reaction is dTDP + GTP = dTTP + GDP. It catalyses the reaction dTDP + ATP = dTTP + ADP. Broad-specificity mitochondrial nucleoside phosphate kinase involved in cellular nucleotide homeostasis by catalyzing nucleoside-phosphate interconversions. Similar to other adenylate kinases, preferentially catalyzes the phosphorylation of the nucleoside monophosphate AMP with ATP as phosphate donor to produce ADP. Phosphorylates only AMP when using GTP as phosphate donor. In vitro, can also catalyze the phosphorylation of CMP, dAMP and dCMP and use GTP as an alternate phosphate donor. Moreover, exhibits a diphosphate kinase activity, producing ATP, CTP, GTP, UTP, TTP, dATP, dCTP and dGTP from the corresponding diphosphate substrates with either ATP or GTP as phosphate donors. Plays a role in controlling cellular ATP levels by regulating phosphorylation and activation of the energy sensor protein kinase AMPK. Plays a protective role in the cellular response to oxidative stress. The chain is Adenylate kinase 4, mitochondrial from Mus musculus (Mouse).